The following is a 477-amino-acid chain: Glutamate--tRNA ligase (477 aa).

The short motif at 8-18 (PSPTGTLHIGT) is the 'HIGH' region element. The 'KMSKS' region motif lies at 247–251 (KLSKR). K250 contributes to the ATP binding site.

It belongs to the class-I aminoacyl-tRNA synthetase family. Glutamate--tRNA ligase type 1 subfamily. In terms of assembly, monomer.

Its subcellular location is the cytoplasm. The catalysed reaction is tRNA(Glu) + L-glutamate + ATP = L-glutamyl-tRNA(Glu) + AMP + diphosphate. Functionally, catalyzes the attachment of glutamate to tRNA(Glu) in a two-step reaction: glutamate is first activated by ATP to form Glu-AMP and then transferred to the acceptor end of tRNA(Glu). This is Glutamate--tRNA ligase from Synechococcus sp. (strain CC9902).